Here is a 155-residue protein sequence, read N- to C-terminus: Small ribosomal subunit protein uS7cz/uS7cy (155 aa).

This sequence belongs to the universal ribosomal protein uS7 family. In terms of assembly, part of the 30S ribosomal subunit.

It is found in the plastid. In terms of biological role, one of the primary rRNA binding proteins, it binds directly to 16S rRNA where it nucleates assembly of the head domain of the 30S subunit. In Epifagus virginiana (Beechdrops), this protein is Small ribosomal subunit protein uS7cz/uS7cy (rps7-A).